The following is a 460-amino-acid chain: MSQILTSRQADELHRALIAYLTAANLPNTAAALREELNLGEDVFDPATAKKYEGLLEKKWTSVVRLQKKSLTPLVTQIMDLESRNHILQSELDNATPTSRQNKDPVAWLPRAPPRHTLQSHRDPITCVAFHPVFSSLASGSEDQTIKIWDWELGELERTIKGHTKAVLDVDYGGPRGNTLLASCSSDLTIKLWDPLDSYKNIRTLPGHDHSVSAVRFIPGSGNLLVSASRDKTLRIWDVSTGYCVKTLRGHAEWVRDVCPSFDGKYILSTSDDYTSRLWDVTVTNPEPRVTLIGHEHVVLCCAIAPPAAYQNLAAMAGIKKPPATSSAEFMATGSRDKSIRLWDARGTCIKTLAGHDNWVRGLVFHPGGKYLLSVSDDKTLRCWDLTQEGKCVKTIGDAHGHFVQCIRWAPSVIKDVSVNGDNGEPNGTPKKGAAVTPDSQIRCVIATGSVDLNVRIFAN.

The 33-residue stretch at 9–41 (QADELHRALIAYLTAANLPNTAAALREELNLGE) folds into the LisH domain. Residues 74 to 96 (LVTQIMDLESRNHILQSELDNAT) adopt a coiled-coil conformation. Residues 90-100 (SELDNATPTSR) show a composition bias toward polar residues. The tract at residues 90-115 (SELDNATPTSRQNKDPVAWLPRAPPR) is disordered. WD repeat units follow at residues 120–161 (SHRD…RTIK), 163–203 (HTKA…KNIR), 207–247 (GHDH…CVKT), 250–289 (GHAEWVRDVCPSFDGKYILSTSDDYTSRLWDVTVTNPEPR), 294–354 (GHEH…KTLA), 355–394 (GHDNWVRGLVFHPGGKYLLSVSDDKTLRCWDLTQEGKCVK), 399–439 (AHGH…VTPD), and 441–460 (QIRCVIATGSVDLNVRIFAN).

This sequence belongs to the WD repeat LIS1/nudF family. As to quaternary structure, self-associates. Interacts with NDL1 and dynein.

It localises to the cytoplasm. Its subcellular location is the cytoskeleton. It is found in the spindle pole. Functionally, positively regulates the activity of the minus-end directed microtubule motor protein dynein. May enhance dynein-mediated microtubule sliding by targeting dynein to the microtubule plus end. Required for nuclear migration during vegetative growth as well as development. Required for retrograde early endosome (EE) transport from the hyphal tip. Required for localization of dynein to the mitotic spindle poles. Recruits additional proteins to the dynein complex at SPBs. This Sordaria macrospora (strain ATCC MYA-333 / DSM 997 / K(L3346) / K-hell) protein is Nuclear distribution protein PAC1-1.